Here is a 140-residue protein sequence, read N- to C-terminus: Large ribosomal subunit protein bL17 (140 aa).

This sequence belongs to the bacterial ribosomal protein bL17 family. As to quaternary structure, part of the 50S ribosomal subunit. Contacts protein L32.

The sequence is that of Large ribosomal subunit protein bL17 from Rhizobium rhizogenes (strain K84 / ATCC BAA-868) (Agrobacterium radiobacter).